The sequence spans 227 residues: Cytochrome c oxidase subunit 2 (227 aa).

Residues 1–14 (MAHPVQLGLQDATS) are Mitochondrial intermembrane-facing. The helical transmembrane segment at 15-45 (PVMEELVTFHDHALMAMFLISFLILYALSAT) threads the bilayer. The Mitochondrial matrix segment spans residues 46–59 (LTTKLTNTNITDAQ). Residues 60–87 (EMETIWTILPAVILVLIALPSLRILYMT) form a helical membrane-spanning segment. Residues 88–227 (DEINNPSFTI…IFEMGPVFTL (140 aa)) lie on the Mitochondrial intermembrane side of the membrane. Cu cation contacts are provided by His161, Cys196, Glu198, Cys200, His204, and Met207. Glu198 contacts Mg(2+).

This sequence belongs to the cytochrome c oxidase subunit 2 family. In terms of assembly, component of the cytochrome c oxidase (complex IV, CIV), a multisubunit enzyme composed of 14 subunits. The complex is composed of a catalytic core of 3 subunits MT-CO1, MT-CO2 and MT-CO3, encoded in the mitochondrial DNA, and 11 supernumerary subunits COX4I, COX5A, COX5B, COX6A, COX6B, COX6C, COX7A, COX7B, COX7C, COX8 and NDUFA4, which are encoded in the nuclear genome. The complex exists as a monomer or a dimer and forms supercomplexes (SCs) in the inner mitochondrial membrane with NADH-ubiquinone oxidoreductase (complex I, CI) and ubiquinol-cytochrome c oxidoreductase (cytochrome b-c1 complex, complex III, CIII), resulting in different assemblies (supercomplex SCI(1)III(2)IV(1) and megacomplex MCI(2)III(2)IV(2)). Found in a complex with TMEM177, COA6, COX18, COX20, SCO1 and SCO2. Interacts with TMEM177 in a COX20-dependent manner. Interacts with COX20. Interacts with COX16. Cu cation is required as a cofactor.

Its subcellular location is the mitochondrion inner membrane. It carries out the reaction 4 Fe(II)-[cytochrome c] + O2 + 8 H(+)(in) = 4 Fe(III)-[cytochrome c] + 2 H2O + 4 H(+)(out). Component of the cytochrome c oxidase, the last enzyme in the mitochondrial electron transport chain which drives oxidative phosphorylation. The respiratory chain contains 3 multisubunit complexes succinate dehydrogenase (complex II, CII), ubiquinol-cytochrome c oxidoreductase (cytochrome b-c1 complex, complex III, CIII) and cytochrome c oxidase (complex IV, CIV), that cooperate to transfer electrons derived from NADH and succinate to molecular oxygen, creating an electrochemical gradient over the inner membrane that drives transmembrane transport and the ATP synthase. Cytochrome c oxidase is the component of the respiratory chain that catalyzes the reduction of oxygen to water. Electrons originating from reduced cytochrome c in the intermembrane space (IMS) are transferred via the dinuclear copper A center (CU(A)) of subunit 2 and heme A of subunit 1 to the active site in subunit 1, a binuclear center (BNC) formed by heme A3 and copper B (CU(B)). The BNC reduces molecular oxygen to 2 water molecules using 4 electrons from cytochrome c in the IMS and 4 protons from the mitochondrial matrix. The protein is Cytochrome c oxidase subunit 2 (MT-CO2) of Theropithecus gelada (Gelada baboon).